Reading from the N-terminus, the 454-residue chain is Histidine--tRNA ligase (454 aa).

This sequence belongs to the class-II aminoacyl-tRNA synthetase family. Homodimer.

The protein resides in the cytoplasm. The catalysed reaction is tRNA(His) + L-histidine + ATP = L-histidyl-tRNA(His) + AMP + diphosphate + H(+). The protein is Histidine--tRNA ligase of Bacteroides fragilis (strain ATCC 25285 / DSM 2151 / CCUG 4856 / JCM 11019 / LMG 10263 / NCTC 9343 / Onslow / VPI 2553 / EN-2).